Here is a 378-residue protein sequence, read N- to C-terminus: Quinolinate synthase (378 aa).

Positions 59 and 80 each coordinate iminosuccinate. C125 contributes to the [4Fe-4S] cluster binding site. Iminosuccinate is bound by residues 151–153 (YAN) and S168. Position 212 (C212) interacts with [4Fe-4S] cluster. Residues 238–240 (HPE) and T255 each bind iminosuccinate. C309 contributes to the [4Fe-4S] cluster binding site.

This sequence belongs to the quinolinate synthase family. Type 1 subfamily. It depends on [4Fe-4S] cluster as a cofactor.

Its subcellular location is the cytoplasm. The enzyme catalyses iminosuccinate + dihydroxyacetone phosphate = quinolinate + phosphate + 2 H2O + H(+). Its pathway is cofactor biosynthesis; NAD(+) biosynthesis; quinolinate from iminoaspartate: step 1/1. Functionally, catalyzes the condensation of iminoaspartate with dihydroxyacetone phosphate to form quinolinate. The polypeptide is Quinolinate synthase (Burkholderia cenocepacia (strain HI2424)).